The primary structure comprises 46 residues: Iota-conotoxin-like R11.17 (46 aa).

Residues Pro2 and Pro11 each carry the 4-hydroxyproline modification. Cystine bridges form between Cys5–Cys19, Cys12–Cys22, Cys18–Cys27, and Cys21–Cys38. Pro29 carries the post-translational modification 4-hydroxyproline. Phe44 carries the D-phenylalanine modification.

It belongs to the conotoxin I1 superfamily. As to expression, expressed by the venom duct.

It is found in the secreted. Iota-conotoxins bind to voltage-gated sodium channels (Nav) and act as agonists by shifting the voltage-dependence of activation to more hyperpolarized levels. Produces general excitatory symptoms. The polypeptide is Iota-conotoxin-like R11.17 (Conus radiatus (Rayed cone)).